The chain runs to 560 residues: Clathrin interactor EPSIN 1 (560 aa).

The region spanning 20–152 is the ENTH domain; that stretch reads LKVLKVPEME…NNKEKISEIR (133 aa). The interval 190–288 is disordered; it reads NFDSYKDRDS…KPSTGSANQV (99 aa). A compositionally biased stretch (basic and acidic residues) spans 193–220; that stretch reads SYKDRDSREDKNDYESFQKSRRGVKTEE. Positions 221 to 233 are enriched in polar residues; sequence QSYTSKKSFSRYG. The span at 234–251 shows a compositional bias: basic and acidic residues; sequence STDHDNLSSGKKSPDSAK. Over residues 274–287 the composition is skewed to polar residues; that stretch reads GTSSNKPSTGSANQ. Positions 296-300 match the Clathrin binding motif; it reads IGDFL. The short motif at 320-322 is the ALPHA-ADR binding element; the sequence is DLF. Residues 414 to 439 are compositionally biased toward polar residues; sequence SHSASVSTGPQAPSVHGSATNTTSPL. Disordered regions lie at residues 414–453 and 517–560; these read SHSASVSTGPQAPSVHGSATNTTSPLSFADSKPQHLQKKD and LGKT…GFKQ. Low complexity predominate over residues 526–536; sequence QQQQQQQQQQQ. Residues 544–554 show a composition bias toward polar residues; that stretch reads FFSSLSNQRYQ.

It belongs to the epsin family. In terms of assembly, interacts with clathrin, VTI11, GAMMA-ADR and VSR1. Binds to the deubiquitinating enzyme AMSH3. As to expression, mostly expressed in cotyledons and flowers, and, to a lower extent, in roots, leaves and siliques (at protein level).

The protein resides in the golgi apparatus. It is found in the prevacuolar compartment. Its subcellular location is the cytoplasm. The protein localises to the cytoplasmic vesicle. It localises to the clathrin-coated vesicle. The protein resides in the cytoskeleton. In terms of biological role, may have a role in transport via clathrin-coated vesicles from the trans-Golgi network to endosomes. Stimulates clathrin assembly. Does not seem to bind to phospholipids. Plays an important role in the vacuolar trafficking of soluble cargo proteins at the trans-Golgi network. This is Clathrin interactor EPSIN 1 (EPSIN1) from Arabidopsis thaliana (Mouse-ear cress).